The following is a 66-amino-acid chain: U-limacoditoxin(59)-Dv128 (66 aa).

Residues 1-20 (MRHLLVLLLICLSVIAMAQA) form the signal peptide. Residues 21–66 (TFGGGLGGAVGGRRRRDIGGGLGGAVGGRRRRDIGGGLGGAVGGKS) form a 3 X 16 AA tandem repeats of [FI]-G-G-G-L-G-G-A-V-G-G-R-R-R-R-D region. 2 consecutive repeat copies span residues 22–37 (FGGG…RRRD) and 38–53 (IGGG…RRRD). Glycine 31 is subject to Glycine amide. Positions 33–37 (RRRRD) are excised as a propeptide. Glycine 47 carries the post-translational modification Glycine amide. A propeptide spanning residues 49-53 (RRRRD) is cleaved from the precursor. Residues 54–64 (IGGGLGGAVGG) form a 3; half-length repeat.

This sequence belongs to the limacoditoxin-59 family. Expressed by the venom secretory cell of the spine. The spine is a cuticular structure containing a single large nucleated venom-secreting cell at its base. It is an independent unit capable of producing, storing and injecting venom. On the back of D.vulnerans caterpillars, spines are grouped together by 50 to 100 to form scoli, of which there are eight in D.vulnerans.

The protein resides in the secreted. Probable toxin. This Doratifera vulnerans (Mottled cup moth) protein is U-limacoditoxin(59)-Dv128.